The following is a 724-amino-acid chain: Probable metal-nicotianamine transporter YSL8 (724 aa).

A disordered region spans residues 1-58 (MRKGGLTPDRDRQIEEHELQETGISPDIERLKRNINATPYQREEEEEDREEQEESVEG). Positions 8–20 (PDRDRQIEEHELQ) are enriched in basic and acidic residues. At Ser25 the chain carries Phosphoserine. The span at 43 to 56 (EEEEEDREEQEESV) shows a compositional bias: acidic residues. 7 consecutive transmembrane segments (helical) span residues 72-92 (LTIR…FIVM), 96-116 (LTTG…FFFV), 144-164 (CVVA…LFAM), 184-204 (LGWM…SVVP), 245-265 (VLGK…FFTA), 304-324 (IINI…WPLI), and 349-369 (VFIA…KVLI). Positions 386–407 (RSSLAHKEDPPASPASPLTPRI) are disordered. Transmembrane regions (helical) follow at residues 423–443 (IPSW…TAIL), 455–475 (IIVI…GAGL), 478–497 (WSLA…AWAG), 501–520 (GGLL…VSTA), 541–561 (FVSQ…VFWL), 603–623 (LMLC…KDCL), 641–661 (FFLG…LFVW), and 679–699 (GLIC…IAGV).

The protein belongs to the YSL (TC 2.A.67.2) family.

The protein resides in the membrane. Its function is as follows. May be involved in the transport of nicotianamine-chelated metals. The protein is Probable metal-nicotianamine transporter YSL8 (YSL8) of Arabidopsis thaliana (Mouse-ear cress).